Here is a 367-residue protein sequence, read N- to C-terminus: Glutamate 5-kinase (367 aa).

Lys-17 provides a ligand contact to ATP. Substrate-binding residues include Ser-57, Asp-144, and Asn-156. ATP contacts are provided by residues 176-177 (SD) and 217-223 (TGGMVSK). A PUA domain is found at 279–357 (VGSLTLDEGA…SELPCELRRP (79 aa)).

The protein belongs to the glutamate 5-kinase family.

The protein localises to the cytoplasm. The catalysed reaction is L-glutamate + ATP = L-glutamyl 5-phosphate + ADP. It functions in the pathway amino-acid biosynthesis; L-proline biosynthesis; L-glutamate 5-semialdehyde from L-glutamate: step 1/2. Functionally, catalyzes the transfer of a phosphate group to glutamate to form L-glutamate 5-phosphate. The protein is Glutamate 5-kinase of Mycobacterium leprae (strain Br4923).